The sequence spans 155 residues: 3-dehydroquinate dehydratase (155 aa).

Catalysis depends on Tyr22, which acts as the Proton acceptor. Positions 73, 79, and 86 each coordinate substrate. His99 serves as the catalytic Proton donor. Substrate is bound by residues 100 to 101 and Arg110; that span reads IS.

This sequence belongs to the type-II 3-dehydroquinase family. As to quaternary structure, homododecamer.

The enzyme catalyses 3-dehydroquinate = 3-dehydroshikimate + H2O. It functions in the pathway metabolic intermediate biosynthesis; chorismate biosynthesis; chorismate from D-erythrose 4-phosphate and phosphoenolpyruvate: step 3/7. Its function is as follows. Catalyzes a trans-dehydration via an enolate intermediate. The protein is 3-dehydroquinate dehydratase of Campylobacter hominis (strain ATCC BAA-381 / DSM 21671 / CCUG 45161 / LMG 19568 / NCTC 13146 / CH001A).